The primary structure comprises 177 residues: 2''-aminoglycoside nucleotidyltransferase (177 aa).

Mg(2+)-binding residues include Asp-44, Asp-46, and Asp-86. Catalysis depends on Asp-86, which acts as the Proton acceptor.

It depends on Mg(2+) as a cofactor.

The enzyme catalyses nucleoside triphosphate + gentamicin = diphosphate + 2''-nucleotidylgentamicin.. Its function is as follows. Mediates bacterial resistance to kanamycin, gentamicin, dibekacin, sisomicin, neomycin and tobramycin by adenylating the 2''-hydroxyl group of these antibiotics. This is 2''-aminoglycoside nucleotidyltransferase (aadB) from Klebsiella pneumoniae.